We begin with the raw amino-acid sequence, 350 residues long: Protein RecA (350 aa).

68 to 75 is a binding site for ATP; the sequence is GPESSGKT.

This sequence belongs to the RecA family.

The protein localises to the cytoplasm. In terms of biological role, can catalyze the hydrolysis of ATP in the presence of single-stranded DNA, the ATP-dependent uptake of single-stranded DNA by duplex DNA, and the ATP-dependent hybridization of homologous single-stranded DNAs. It interacts with LexA causing its activation and leading to its autocatalytic cleavage. This chain is Protein RecA, found in Mycolicibacterium vanbaalenii (strain DSM 7251 / JCM 13017 / BCRC 16820 / KCTC 9966 / NRRL B-24157 / PYR-1) (Mycobacterium vanbaalenii).